Consider the following 644-residue polypeptide: Chaperone protein HtpG (644 aa).

The segment at methionine 1–arginine 352 is a; substrate-binding. The tract at residues glutamate 353–arginine 566 is b. Residues leucine 567–leucine 644 are c.

This sequence belongs to the heat shock protein 90 family. As to quaternary structure, homodimer.

Its subcellular location is the cytoplasm. Molecular chaperone. Has ATPase activity. In Mycolicibacterium paratuberculosis (strain ATCC BAA-968 / K-10) (Mycobacterium paratuberculosis), this protein is Chaperone protein HtpG.